The sequence spans 56 residues: Hydrophobic protein LTI6A (56 aa).

Transmembrane regions (helical) follow at residues isoleucine 11–glutamate 31 and isoleucine 34–isoleucine 54.

Belongs to the UPF0057 (PMP3) family. As to expression, expressed in shoot of cold stressed seedlings.

The protein resides in the membrane. Functionally, plays a role in the regulation of membrane potential. Could mediate a proton leak. The sequence is that of Hydrophobic protein LTI6A (LTI6A) from Oryza sativa subsp. japonica (Rice).